Consider the following 165-residue polypeptide: Large ribosomal subunit protein uL11A (165 aa).

Proline 2 is subject to N,N-dimethylproline; by NTM1. Residues lysine 4 and lysine 11 each carry the N6,N6,N6-trimethyllysine; by RKM2 modification. Phosphoserine is present on residues serine 25 and serine 38. Arginine 67 carries the post-translational modification N5-methylarginine; by RMT2. Glycyl lysine isopeptide (Lys-Gly) (interchain with G-Cter in ubiquitin) cross-links involve residues lysine 130 and lysine 146.

Belongs to the universal ribosomal protein uL11 family. Component of the large ribosomal subunit (LSU). Mature yeast ribosomes consist of a small (40S) and a large (60S) subunit. The 40S small subunit contains 1 molecule of ribosomal RNA (18S rRNA) and 33 different proteins (encoded by 57 genes). The large 60S subunit contains 3 rRNA molecules (25S, 5.8S and 5S rRNA) and 46 different proteins (encoded by 81 genes). Post-translationally, it appears that the main modified species for L12 contains 6 methyl groups, 2 on Pro-2, 3 on Lys-4 and 1 on Arg-67. Although not reproduced with a second method, methylation at Lys-11 cannot be ruled out.

It localises to the cytoplasm. Functionally, component of the ribosome, a large ribonucleoprotein complex responsible for the synthesis of proteins in the cell. The small ribosomal subunit (SSU) binds messenger RNAs (mRNAs) and translates the encoded message by selecting cognate aminoacyl-transfer RNA (tRNA) molecules. The large subunit (LSU) contains the ribosomal catalytic site termed the peptidyl transferase center (PTC), which catalyzes the formation of peptide bonds, thereby polymerizing the amino acids delivered by tRNAs into a polypeptide chain. The nascent polypeptides leave the ribosome through a tunnel in the LSU and interact with protein factors that function in enzymatic processing, targeting, and the membrane insertion of nascent chains at the exit of the ribosomal tunnel. This is Large ribosomal subunit protein uL11A from Saccharomyces cerevisiae (strain ATCC 204508 / S288c) (Baker's yeast).